Consider the following 362-residue polypeptide: Probable dual-specificity RNA methyltransferase RlmN (362 aa).

The active-site Proton acceptor is Glu-105. Residues His-111–Asp-344 form the Radical SAM core domain. A disulfide bond links Cys-118 and Cys-349. [4Fe-4S] cluster-binding residues include Cys-125, Cys-129, and Cys-132. Residues Gly-175–Glu-176, Ser-207, Ser-230–His-232, and Asn-306 contribute to the S-adenosyl-L-methionine site. Cys-349 acts as the S-methylcysteine intermediate in catalysis.

It belongs to the radical SAM superfamily. RlmN family. It depends on [4Fe-4S] cluster as a cofactor.

The protein localises to the cytoplasm. It carries out the reaction adenosine(2503) in 23S rRNA + 2 reduced [2Fe-2S]-[ferredoxin] + 2 S-adenosyl-L-methionine = 2-methyladenosine(2503) in 23S rRNA + 5'-deoxyadenosine + L-methionine + 2 oxidized [2Fe-2S]-[ferredoxin] + S-adenosyl-L-homocysteine. It catalyses the reaction adenosine(37) in tRNA + 2 reduced [2Fe-2S]-[ferredoxin] + 2 S-adenosyl-L-methionine = 2-methyladenosine(37) in tRNA + 5'-deoxyadenosine + L-methionine + 2 oxidized [2Fe-2S]-[ferredoxin] + S-adenosyl-L-homocysteine. Its function is as follows. Specifically methylates position 2 of adenine 2503 in 23S rRNA and position 2 of adenine 37 in tRNAs. This Halalkalibacterium halodurans (strain ATCC BAA-125 / DSM 18197 / FERM 7344 / JCM 9153 / C-125) (Bacillus halodurans) protein is Probable dual-specificity RNA methyltransferase RlmN.